Consider the following 337-residue polypeptide: G-protein coupled receptor 26 (337 aa).

Residues 1 to 10 (MNSWDAGLAG) lie on the Extracellular side of the membrane. A helical membrane pass occupies residues 11-31 (LLVGTIGVSLLSNGLVLLCLL). The Cytoplasmic segment spans residues 32-47 (HSADIRRQAPALFTLN). Residues 48–68 (LTCGNLLCTVVNMPLTLAGVV) form a helical membrane-spanning segment. Over 69 to 81 (AQRQPAGDRLCRL) the chain is Extracellular. C79 and C156 are disulfide-bonded. The helical transmembrane segment at 82-102 (AAFLDTFLAANSMLSMAALSI) threads the bilayer. Residues 103 to 123 (DRWVAVVFPLSYRAKMRLRDA) are Cytoplasmic-facing. Residues 124-144 (AFMVAYTWLHALTFPATALAL) traverse the membrane as a helical segment. Residues 145 to 168 (SWLGFHQLYASCTLCSRRPDERLR) are Extracellular-facing. The chain crosses the membrane as a helical span at residues 169–189 (FAVFTSAFHALSFLLSFIVLC). Residues 190-245 (FTYLKVLKVARFHCKRIDVITMQTLVLLVDIHPSVRERCLEEQKRRRQRATKKIST) lie on the Cytoplasmic side of the membrane. A helical transmembrane segment spans residues 246-266 (FIGTFLVCFAPYVITRLVELF). At 267–276 (STAPIGSHWG) the chain is on the extracellular side. A helical membrane pass occupies residues 277–297 (VLSKCLAYSKAASDPFVYSLL). The Cytoplasmic segment spans residues 298–337 (RHQYRRSCKELLNRIFNRRSLHSVGLTGDSHSQNILPVSE).

The protein belongs to the G-protein coupled receptor 1 family. As to expression, exclusively expressed in the brain. Prominent expression is detected throughout the entire neocortex at all rostrocaudal and dorsoventral levels. Strong expression is detected in olfactory and auditory sensory areas.

Its subcellular location is the cell membrane. Its function is as follows. Orphan receptor. Displays a significant level of constitutive activity. Its effect is mediated by G(s)-alpha protein that stimulate adenylate cyclase, resulting in an elevation of intracellular cAMP. The polypeptide is G-protein coupled receptor 26 (Gpr26) (Mus musculus (Mouse)).